A 28-amino-acid polypeptide reads, in one-letter code: 50 kDa venom protease (28 aa).

Belongs to the venom metalloproteinase (M12B) family. The cofactor is Zn(2+). In terms of tissue distribution, expressed by the venom gland.

Its subcellular location is the secreted. In Proatheris superciliaris (Lowland swamp viper), this protein is 50 kDa venom protease.